The following is a 225-amino-acid chain: uncharacterized protein (225 aa).

The next 6 helical transmembrane spans lie at 25–45 (MMLA…IPFL), 57–77 (VFLI…ITVA), 83–103 (FIWD…NFAI), 109–129 (LYFH…SLAT), 135–155 (LLTT…FGYV), and 187–207 (IFAL…LIGV).

Its subcellular location is the cell membrane. This is an uncharacterized protein from Mycoplasma pneumoniae (strain ATCC 29342 / M129 / Subtype 1) (Mycoplasmoides pneumoniae).